The sequence spans 265 residues: Tryptophan synthase alpha chain (265 aa).

Catalysis depends on proton acceptor residues glutamate 49 and glutamate 60.

This sequence belongs to the TrpA family. Tetramer of two alpha and two beta chains.

It catalyses the reaction (1S,2R)-1-C-(indol-3-yl)glycerol 3-phosphate + L-serine = D-glyceraldehyde 3-phosphate + L-tryptophan + H2O. It participates in amino-acid biosynthesis; L-tryptophan biosynthesis; L-tryptophan from chorismate: step 5/5. Functionally, the alpha subunit is responsible for the aldol cleavage of indoleglycerol phosphate to indole and glyceraldehyde 3-phosphate. This Herminiimonas arsenicoxydans protein is Tryptophan synthase alpha chain.